Consider the following 291-residue polypeptide: ATP synthase gamma chain (291 aa).

The protein belongs to the ATPase gamma chain family. As to quaternary structure, F-type ATPases have 2 components, CF(1) - the catalytic core - and CF(0) - the membrane proton channel. CF(1) has five subunits: alpha(3), beta(3), gamma(1), delta(1), epsilon(1). CF(0) has three main subunits: a, b and c.

It is found in the cell inner membrane. Its function is as follows. Produces ATP from ADP in the presence of a proton gradient across the membrane. The gamma chain is believed to be important in regulating ATPase activity and the flow of protons through the CF(0) complex. The protein is ATP synthase gamma chain of Burkholderia ambifaria (strain MC40-6).